Consider the following 265-residue polypeptide: Thiazole synthase (265 aa).

Catalysis depends on lysine 103, which acts as the Schiff-base intermediate with DXP. Residues glycine 164, 190–191 (AG), and 212–213 (NT) contribute to the 1-deoxy-D-xylulose 5-phosphate site.

It belongs to the ThiG family. Homotetramer. Forms heterodimers with either ThiH or ThiS.

Its subcellular location is the cytoplasm. The enzyme catalyses [ThiS sulfur-carrier protein]-C-terminal-Gly-aminoethanethioate + 2-iminoacetate + 1-deoxy-D-xylulose 5-phosphate = [ThiS sulfur-carrier protein]-C-terminal Gly-Gly + 2-[(2R,5Z)-2-carboxy-4-methylthiazol-5(2H)-ylidene]ethyl phosphate + 2 H2O + H(+). Its pathway is cofactor biosynthesis; thiamine diphosphate biosynthesis. Catalyzes the rearrangement of 1-deoxy-D-xylulose 5-phosphate (DXP) to produce the thiazole phosphate moiety of thiamine. Sulfur is provided by the thiocarboxylate moiety of the carrier protein ThiS. In vitro, sulfur can be provided by H(2)S. This is Thiazole synthase from Bordetella bronchiseptica (strain ATCC BAA-588 / NCTC 13252 / RB50) (Alcaligenes bronchisepticus).